A 286-amino-acid polypeptide reads, in one-letter code: MLKTVHQKLLHHTRPLLAWLKLLWRRIDEDHMTTLAGNLAYVSLLSLVPLIAVVFALFAAFPMFSEVSVQIRHFIFANFIPATGDVIQGYIEQFVANSSRMTAVGAFGLIVTSLLLMYSIDSALNTIWRSTRSRPKVYSFAVYWMILTLGPLLAGASLAISSYLLSLRWASDLDGVIDNLLRLFPLILSWAAFWLLYSIVPTTQVRNRDAVIGALVAALLFEAGKKAFALYITTFPSYQLIYGVISVVPILFVWVYWTWCIVLLGAEITVTLGEYRKLKTEETEQP.

7 helical membrane passes run 44–64, 74–94, 104–124, 140–160, 183–203, 210–230, and 244–264; these read LLSL…FPMF, FIFA…IEQF, VGAF…DSAL, FAVY…SLAI, LFPL…VPTT, AVIG…AFAL, and VISV…IVLL.

The protein belongs to the UPF0761 family.

The protein localises to the cell inner membrane. In Klebsiella pneumoniae subsp. pneumoniae (strain ATCC 700721 / MGH 78578), this protein is UPF0761 membrane protein KPN78578_41360.